The following is a 2285-amino-acid chain: Protein Ycf2 (2285 aa).

1638–1645 (GSIGTGRS) serves as a coordination point for ATP.

Belongs to the Ycf2 family.

Its subcellular location is the plastid. The protein localises to the chloroplast stroma. Functionally, probable ATPase of unknown function. Its presence in a non-photosynthetic plant (Epifagus virginiana) and experiments in tobacco indicate that it has an essential function which is probably not related to photosynthesis. This is Protein Ycf2 from Populus trichocarpa (Western balsam poplar).